The primary structure comprises 321 residues: Probable membrane-associated kinase regulator 3 (321 aa).

Positions 297–314 (KSNVTESELCSSRTSVST) are enriched in polar residues. The interval 297 to 321 (KSNVTESELCSSRTSVSTCGDLDKD) is disordered.

The protein resides in the cell membrane. This chain is Probable membrane-associated kinase regulator 3 (MAKR3), found in Arabidopsis thaliana (Mouse-ear cress).